The primary structure comprises 1430 residues: Nephrocystin-4 (1430 aa).

Positions 824–1430 are sufficient for basal bodies localization; sequence MRMGNVGRPP…ETFCVKVRYE (607 aa). The segment at 828–857 is disordered; it reads NVGRPPEKKLKRRETLPPSNSRIITMHDGR.

This sequence belongs to the NPHP4 family.

The protein localises to the cytoplasm. Its subcellular location is the cytoskeleton. The protein resides in the cilium basal body. In terms of biological role, involved in the organization of apical junctions. Required for building functional cilia. Involved in the organization of the subapical actin network in multiciliated epithelial cells. Seems to recruit int to basal bodies of motile cilia which subsequently interacts with actin-modifying proteins such as daam1. May down-regulate the canonical Wnt pathway and promote the Wnt-PCP pathway. Acts as a negative regulator of the hippo pathway. The chain is Nephrocystin-4 (nphp4) from Xenopus laevis (African clawed frog).